The following is an 85-amino-acid chain: Splicing factor 3B subunit 5 (85 aa).

Belongs to the SF3B5 family. Component of the SF3B complex. SF3B complex associates with the splicing factor SF3A complex and a 12S RNA unit to form the U2 small nuclear ribonucleoproteins complex (U2 snRNP). Identified in the SAGA transcription regulatory histone acetylation (HAT) complex; the interaction is RNA-independent.

It localises to the nucleus. Involved in pre-mRNA splicing as component of spliceosome. As part of the spliceosome complex, plays a role in the regulation of spermatogonial differentiation. When associated with the SAGA transcription regulatory histone acetylation (HAT) complex, might be involved in the transcriptional activation of a subset of SAGA-regulated genes. In Drosophila melanogaster (Fruit fly), this protein is Splicing factor 3B subunit 5.